The following is a 452-amino-acid chain: tRNA modification GTPase MnmE (452 aa).

Positions 21, 82, and 121 each coordinate (6S)-5-formyl-5,6,7,8-tetrahydrofolate. The TrmE-type G domain maps to 214–372 (GARVVLVGRP…LAKTIATTLL (159 aa)). Asparagine 224 is a binding site for K(+). Residues 224-229 (NVGKSS), 243-249 (TPIPGTT), 268-271 (DTAG), and 353-355 (SAR) each bind GTP. Residue serine 228 coordinates Mg(2+). Positions 243, 245, and 248 each coordinate K(+). Threonine 249 is a binding site for Mg(2+). Lysine 452 is a (6S)-5-formyl-5,6,7,8-tetrahydrofolate binding site.

The protein belongs to the TRAFAC class TrmE-Era-EngA-EngB-Septin-like GTPase superfamily. TrmE GTPase family. As to quaternary structure, homodimer. Heterotetramer of two MnmE and two MnmG subunits. It depends on K(+) as a cofactor.

It is found in the cytoplasm. In terms of biological role, exhibits a very high intrinsic GTPase hydrolysis rate. Involved in the addition of a carboxymethylaminomethyl (cmnm) group at the wobble position (U34) of certain tRNAs, forming tRNA-cmnm(5)s(2)U34. The chain is tRNA modification GTPase MnmE from Chloroflexus aurantiacus (strain ATCC 29366 / DSM 635 / J-10-fl).